Consider the following 340-residue polypeptide: Guanine nucleotide-binding protein G(I)/G(S)/G(T) subunit beta-1 (340 aa).

An N-acetylserine modification is found at Ser2. At Ser2 the chain carries Phosphoserine. WD repeat units lie at residues 46 to 94 (RTRR…HAIP), 95 to 140 (LRSS…RELA), 141 to 181 (GHTG…TTFT), 182 to 223 (GHTG…QTFT), 224 to 267 (GHES…YSHD), 268 to 309 (NIIC…GVLA), and 310 to 340 (GHDN…KIWN). Residue His266 is modified to Phosphohistidine.

The protein belongs to the WD repeat G protein beta family. As to quaternary structure, g proteins are composed of 3 units, alpha, beta and gamma. The heterodimer formed by GNB1 and GNG2 interacts with ARHGEF5. The heterodimer formed by GNB1 and GNG2 interacts with GRK2. Forms a complex with GNAO1 and GNG3. Interacts with ARHGEF18 and RASD2. Forms complexes with TAS2R14 and G-proteins; these complexes play a role in the perception of bitterness. Component of the TAS2R14-GNAI1 complex, consisting of TAS2R14, GNAI1, GNB1 and GNG2. Component of the TAS2R14-GNAT3 complex, consisting of TAS2R14, GNAT3, GNB1 and GNG2. Component of the TAS2R14-GNAS2 complex, consisting of TAS2R14, GNAS2, GNB1 and GNG2. In terms of processing, phosphorylation at His-266 by NDKB contributes to G protein activation by increasing the high energetic phosphate transfer onto GDP.

Functionally, guanine nucleotide-binding proteins (G proteins) are involved as a modulator or transducer in various transmembrane signaling systems. The beta and gamma chains are required for the GTPase activity, for replacement of GDP by GTP, and for G protein-effector interaction. This is Guanine nucleotide-binding protein G(I)/G(S)/G(T) subunit beta-1 (GNB1) from Bos taurus (Bovine).